A 579-amino-acid chain; its full sequence is Folliculin (579 aa).

Residues 32–52 are disordered; the sequence is GASCGDSIGQGEQAEDEEMGI. A uDENN FLCN/SMCR8-type domain is found at 86 to 242; that stretch reads RSLAAGHPGY…RNGNAARSLT (157 aa). The 155-residue stretch at 337–491 folds into the cDENN FLCN/SMCR8-type domain; that stretch reads NMVQRRMGVF…ILNKIEAALS (155 aa). One can recognise a dDENN FLCN/SMCR8-type domain in the interval 493–558; that stretch reads ENLSMDVVDQ…LLKFWMTGLS (66 aa).

The protein belongs to the folliculin family. As to quaternary structure, component of the lysosomal folliculin complex (LFC).

The protein resides in the lysosome membrane. Its subcellular location is the cytoplasm. It is found in the cytosol. The protein localises to the cell projection. It localises to the cilium. The protein resides in the cytoskeleton. Its subcellular location is the microtubule organizing center. It is found in the centrosome. The protein localises to the spindle. It localises to the nucleus. GTPase-activating activity is inhibited in the folliculin complex (LFC), which stabilizes the GDP-bound state of RagA/RRAGA (or RagB/RRAGB), because Arg-164 is located far from the RagC/RRAGC or RagD/RRAGD nucleotide pocket. Disassembly of the LFC complex upon amino acid restimulation liberates the GTPase-activating activity. In terms of biological role, multi-functional protein, involved in both the cellular response to amino acid availability and in the regulation of glycolysis. GTPase-activating protein that plays a key role in the cellular response to amino acid availability through regulation of the non-canonical mTORC1 signaling cascade controlling the MiT/TFE factors tfeb and tfe3. Activates mTORC1 by acting as a GTPase-activating protein: specifically stimulates GTP hydrolysis by RagC/RRAGC or RagD/RRAGD, promoting the conversion to the GDP-bound state of RagC/RRAGC or RagD/RRAGD, and thereby activating the kinase activity of mTORC1. The GTPase-activating activity is inhibited during starvation and activated in presence of nutrients. Acts as a key component for non-canonical mTORC1-dependent control of the MiT/TFE factors tfeb and tfe3, while it is not involved in mTORC1-dependent phosphorylation of canonical RPS6KB1/S6K1 and EIF4EBP1/4E-BP1. In low-amino acid conditions, the lysosomal folliculin complex (LFC) is formed on the membrane of lysosomes, which inhibits the GTPase-activating activity of flcn, inactivates mTORC1 and maximizes nuclear translocation of tfeb and tfe3. Upon amino acid restimulation, RagA/RRAGA (or RagB/RRAGB) nucleotide exchange promotes disassembly of the LFC complex and liberates the GTPase-activating activity of flcn, leading to activation of mTORC1 and subsequent cytoplasmic retention of tfeb and tfe3. Required for the exit of hematopoietic stem cell from pluripotency by promoting mTOR-dependent cytoplasmic retention of tfe3, thereby increasing Wnt signaling. Acts as an inhibitor of browning of adipose tissue by regulating mTOR-dependent cytoplasmic retention of tfe3. In response to flow stress, regulates STK11/LKB1 accumulation and mTORC1 activation through primary cilia. Required for starvation-induced perinuclear clustering of lysosomes by promoting association of rilp with its effector rab34. Involved in the control of embryonic stem cells differentiation; together with lamtor1 it is necessary to recruit and activate RagC/RRAGC and RagD/RRAGD at the lysosomes, and to induce exit of embryonic stem cells from pluripotency via non-canonical, mTOR-independent tfe3 inactivation. Regulates glycolysis by binding to lactate dehydrogenase ldha, acting as an uncompetitive inhibitor. The sequence is that of Folliculin from Xenopus tropicalis (Western clawed frog).